Consider the following 426-residue polypeptide: Peptidoglycan DD-endopeptidase ShyB (426 aa).

A signal peptide spans 1 to 21 (MGQFRFLALIVAVLCFSVALF). Positions 32-48 (SYSVPLNQSVNTSQPPS) are enriched in polar residues. The segment at 32 to 55 (SYSVPLNQSVNTSQPPSSEMVPSD) is disordered. Positions 291, 295, and 372 each coordinate Zn(2+).

Belongs to the peptidase M23B family. In terms of assembly, monomer. It depends on Zn(2+) as a cofactor.

The protein localises to the periplasm. It functions in the pathway cell wall degradation; peptidoglycan degradation. Not inhibited by metal chelator EDTA. Its function is as follows. Cell wall peptidoglycan (PG) DD-endopeptidase, which may act as a substitute for other zinc-dependent PG endopeptidases (ShyA and ShyC) during zinc starvation. Hydrolyzes peptide cross-links which covalently connect adjacent PG strands probably to allow insertion of new glycans and thus cell wall expansion. Degrades purified whole PG sacculi in vitro. It is unclear how it is able to function in low zinc environments, but that may possibly be due to binding zinc with very high affinity, utilizing an alternative metal cofactor or that it may function independently of a bound metal cofactor. This Vibrio cholerae serotype O1 (strain ATCC 39315 / El Tor Inaba N16961) protein is Peptidoglycan DD-endopeptidase ShyB.